The following is a 269-amino-acid chain: Thymidylate synthase (269 aa).

A dUMP-binding site is contributed by Arg21. His51 contacts (6R)-5,10-methylene-5,6,7,8-tetrahydrofolate. 126–127 (RR) lines the dUMP pocket. Catalysis depends on Cys146, which acts as the Nucleophile. DUMP contacts are provided by residues 171-174 (RSGD), Asn182, and 212-214 (HLY). Residue Asp174 coordinates (6R)-5,10-methylene-5,6,7,8-tetrahydrofolate. Ala268 contacts (6R)-5,10-methylene-5,6,7,8-tetrahydrofolate.

It belongs to the thymidylate synthase family. Bacterial-type ThyA subfamily. In terms of assembly, homodimer.

The protein resides in the cytoplasm. The catalysed reaction is dUMP + (6R)-5,10-methylene-5,6,7,8-tetrahydrofolate = 7,8-dihydrofolate + dTMP. The protein operates within pyrimidine metabolism; dTTP biosynthesis. In terms of biological role, catalyzes the reductive methylation of 2'-deoxyuridine-5'-monophosphate (dUMP) to 2'-deoxythymidine-5'-monophosphate (dTMP) while utilizing 5,10-methylenetetrahydrofolate (mTHF) as the methyl donor and reductant in the reaction, yielding dihydrofolate (DHF) as a by-product. This enzymatic reaction provides an intracellular de novo source of dTMP, an essential precursor for DNA biosynthesis. In Methylocella silvestris (strain DSM 15510 / CIP 108128 / LMG 27833 / NCIMB 13906 / BL2), this protein is Thymidylate synthase.